Here is a 304-residue protein sequence, read N- to C-terminus: Germ cell-specific gene 1-like protein (304 aa).

Over 1–8 (MKTTRKCR) the chain is Cytoplasmic. Residues 9–29 (ALLSVGLNLLALLFSTTAFIT) form a helical membrane-spanning segment. At 30 to 112 (TYWCEGTQRV…FIDLAPASER (83 aa)) the chain is on the extracellular side. Residues 113-133 (GVLWLSVVSEVLYIMLLVVGF) traverse the membrane as a helical segment. The Cytoplasmic portion of the chain corresponds to 134–153 (SLMCLELFHSSNVIDGLKLN). A helical membrane pass occupies residues 154-174 (AFAAVFTVLSGLLGMVAHMMY). The Extracellular segment spans residues 175 to 197 (TQVFQITVSLGPEDWRPHTWDYG). A helical transmembrane segment spans residues 198–218 (WSFCMAWGSFTCCMAASVTTL). The Cytoplasmic portion of the chain corresponds to 219–304 (NSYTKTVIEF…NTESLGEEQC (86 aa)). A compositionally biased stretch (polar residues) spans 266-278 (VDVYPSHGSSHGN). Residues 266–304 (VDVYPSHGSSHGNSRGKMRSPPAPVDQGDNTESLGEEQC) are disordered.

This sequence belongs to the GSG1 family. As to quaternary structure, component of the AMPAR complex.

The protein localises to the cell membrane. It localises to the synapse. As a component of the AMPAR complex, modifies AMPA receptor (AMPAR) gating. The polypeptide is Germ cell-specific gene 1-like protein (gsg1l) (Danio rerio (Zebrafish)).